Consider the following 364-residue polypeptide: Acetylserotonin O-methyltransferase 1 (364 aa).

S-adenosyl-L-homocysteine is bound by residues Gly-208, Asp-231, Asp-251, and Lys-265. The active-site Proton acceptor is the His-269. Catalysis depends on residues Glu-300 and Glu-330.

It belongs to the class I-like SAM-binding methyltransferase superfamily. Cation-independent O-methyltransferase family. In terms of assembly, homodimer. As to expression, expressed in leaves, stems and flowers.

It is found in the cytoplasm. The enzyme catalyses N-acetylserotonin + S-adenosyl-L-methionine = melatonin + S-adenosyl-L-homocysteine + H(+). Its pathway is aromatic compound metabolism; melatonin biosynthesis; melatonin from serotonin: step 1/2. Methyltransferase which catalyzes the transfer of a methyl group onto N-acetylserotonin, producing melatonin (N-acetyl-5-methoxytryptamine). The polypeptide is Acetylserotonin O-methyltransferase 1 (Oryza sativa subsp. japonica (Rice)).